The sequence spans 245 residues: 4-hydroxy-tetrahydrodipicolinate reductase (245 aa).

Residues 8 to 13 (GSTGKM), 78 to 80 (GTT), and 102 to 105 (SANM) each bind NAD(+). H134 acts as the Proton donor/acceptor in catalysis. Residue H135 coordinates (S)-2,3,4,5-tetrahydrodipicolinate. K138 acts as the Proton donor in catalysis. 144 to 145 (GT) provides a ligand contact to (S)-2,3,4,5-tetrahydrodipicolinate.

It belongs to the DapB family.

The protein localises to the cytoplasm. The catalysed reaction is (S)-2,3,4,5-tetrahydrodipicolinate + NAD(+) + H2O = (2S,4S)-4-hydroxy-2,3,4,5-tetrahydrodipicolinate + NADH + H(+). It catalyses the reaction (S)-2,3,4,5-tetrahydrodipicolinate + NADP(+) + H2O = (2S,4S)-4-hydroxy-2,3,4,5-tetrahydrodipicolinate + NADPH + H(+). Its pathway is amino-acid biosynthesis; L-lysine biosynthesis via DAP pathway; (S)-tetrahydrodipicolinate from L-aspartate: step 4/4. Its function is as follows. Catalyzes the conversion of 4-hydroxy-tetrahydrodipicolinate (HTPA) to tetrahydrodipicolinate. The protein is 4-hydroxy-tetrahydrodipicolinate reductase of Rickettsia akari (strain Hartford).